The primary structure comprises 199 residues: Putative ATP-dependent Clp protease proteolytic subunit-like (199 aa).

The protein belongs to the peptidase S14 family. Component of the chloroplastic Clp protease core complex.

It is found in the plastid. It localises to the cyanelle. In terms of biological role, has lost the two conserved residues (Ser and His) proposed to be part of the active site. Therefore it could be inactive. This Cyanophora paradoxa protein is Putative ATP-dependent Clp protease proteolytic subunit-like (clpP-B).